The following is a 238-amino-acid chain: Alpha-tubulin N-acetyltransferase (238 aa).

The N-acetyltransferase domain occupies 1–196; the sequence is MEFDFDISQS…NNFVVFEDLF (196 aa). Residues 129–142 and 165–174 each bind acetyl-CoA; these read FYVHESQQRTGNGK and SFKFLSFLQK.

This sequence belongs to the acetyltransferase ATAT1 family.

It carries out the reaction L-lysyl-[alpha-tubulin] + acetyl-CoA = N(6)-acetyl-L-lysyl-[alpha-tubulin] + CoA + H(+). Functionally, specifically acetylates 'Lys-40' in alpha-tubulin on the lumenal side of microtubules. Promotes microtubule destabilization and accelerates microtubule dynamics; this activity may be independent of acetylation activity. Acetylates alpha-tubulin with a slow enzymatic rate, due to a catalytic site that is not optimized for acetyl transfer. Enters the microtubule through each end and diffuses quickly throughout the lumen of microtubules. Acetylates only long/old microtubules because of its slow acetylation rate since it does not have time to act on dynamically unstable microtubules before the enzyme is released. The chain is Alpha-tubulin N-acetyltransferase from Trichoplax adhaerens (Trichoplax reptans).